A 43-amino-acid chain; its full sequence is Metallothionein-3 (43 aa).

This sequence belongs to the metallothionein superfamily. Type 5 family.

This protein binds cations of several transition elements. Thought to be involved in metal ion homeostasis. The polypeptide is Metallothionein-3 (MtnC) (Drosophila melanogaster (Fruit fly)).